A 193-amino-acid chain; its full sequence is Putative protein-glutamate methylesterase/protein-glutamine glutaminase (193 aa).

The CheB-type methylesterase domain maps to 1–179 (MNYEAIVIGV…DYVLSLEKIA (179 aa)). Catalysis depends on residues S11, H38, and D131.

Belongs to the CheB family.

Its subcellular location is the cytoplasm. It carries out the reaction [protein]-L-glutamate 5-O-methyl ester + H2O = L-glutamyl-[protein] + methanol + H(+). It catalyses the reaction L-glutaminyl-[protein] + H2O = L-glutamyl-[protein] + NH4(+). Functionally, may be involved in chemotaxis. The chain is Putative protein-glutamate methylesterase/protein-glutamine glutaminase (cheB2) from Leptospira interrogans serogroup Icterohaemorrhagiae serovar copenhageni (strain Fiocruz L1-130).